We begin with the raw amino-acid sequence, 333 residues long: Lipoyl synthase (333 aa).

[4Fe-4S] cluster-binding residues include cysteine 55, cysteine 60, cysteine 66, cysteine 81, cysteine 85, cysteine 88, and serine 292. Residues 67–281 (WEDREATFLI…SAEAERLGFA (215 aa)) enclose the Radical SAM core domain.

This sequence belongs to the radical SAM superfamily. Lipoyl synthase family. Requires [4Fe-4S] cluster as cofactor.

Its subcellular location is the cytoplasm. The enzyme catalyses [[Fe-S] cluster scaffold protein carrying a second [4Fe-4S](2+) cluster] + N(6)-octanoyl-L-lysyl-[protein] + 2 oxidized [2Fe-2S]-[ferredoxin] + 2 S-adenosyl-L-methionine + 4 H(+) = [[Fe-S] cluster scaffold protein] + N(6)-[(R)-dihydrolipoyl]-L-lysyl-[protein] + 4 Fe(3+) + 2 hydrogen sulfide + 2 5'-deoxyadenosine + 2 L-methionine + 2 reduced [2Fe-2S]-[ferredoxin]. It participates in protein modification; protein lipoylation via endogenous pathway; protein N(6)-(lipoyl)lysine from octanoyl-[acyl-carrier-protein]: step 2/2. In terms of biological role, catalyzes the radical-mediated insertion of two sulfur atoms into the C-6 and C-8 positions of the octanoyl moiety bound to the lipoyl domains of lipoate-dependent enzymes, thereby converting the octanoylated domains into lipoylated derivatives. The protein is Lipoyl synthase of Kineococcus radiotolerans (strain ATCC BAA-149 / DSM 14245 / SRS30216).